The following is a 93-amino-acid chain: Alpha-elapitoxin-Oh2a (93 aa).

Positions 1–21 (MKTLLLTLVVVTIVCLDLGYT) are cleaved as a signal peptide. Cystine bridges form between Cys-24-Cys-43, Cys-36-Cys-64, Cys-49-Cys-53, Cys-68-Cys-79, and Cys-80-Cys-85.

The protein belongs to the three-finger toxin family. Long-chain subfamily. Type II alpha-neurotoxin sub-subfamily. Expressed by the venom gland.

It is found in the secreted. Functionally, binds with high affinity to muscular (alpha-1/CHRNA1) and neuronal (alpha-7/CHRNA7) nicotinic acetylcholine receptor (nAChR) and inhibits acetylcholine from binding to the receptor, thereby impairing neuromuscular and neuronal transmission. In Ophiophagus hannah (King cobra), this protein is Alpha-elapitoxin-Oh2a.